The primary structure comprises 637 residues: Rab11 family-interacting protein 4 (637 aa).

In terms of domain architecture, EF-hand spans 49–84 (GQGEEVEKLVKYLDPNDLGRINFKDFCRGVFAMKGC). D62, N64, R68, and D73 together coordinate Ca(2+). Positions 82 to 637 (KGCEELLKDV…HNPSILEIKH (556 aa)) are necessary for interaction with RAB11A, subcellular location, homo- or heterooligomerization. Disordered stretches follow at residues 138-175 (EEEA…PAEK) and 219-256 (YGEG…SAGQ). The stretch at 280–617 (KINLLNDLEA…EEINFRLRQY (338 aa)) forms a coiled coil. One can recognise an FIP-RBD domain in the interval 574–636 (EAKNLFAAQT…DHNPSILEIK (63 aa)).

In terms of assembly, homodimer. Forms a complex with Rab11 (RAB11A or RAB11B) and ARF6. Interacts with RAB11A; the interaction is direct. Forms a heterooligomeric complex with RAB11FIP2, RAB11FIP3 and RAB11FIP5. Interacts with ECPAS. (Microbial infection) Interacts with human cytomegalovirus/HHV-5 protein gM/UL100. Present at high level in testis (at protein level). Weakly expressed in other tissues.

Its subcellular location is the endosome. The protein resides in the cytoplasm. It localises to the cytoskeleton. It is found in the spindle. The protein localises to the microtubule organizing center. Its subcellular location is the centrosome. The protein resides in the recycling endosome membrane. It localises to the cleavage furrow. It is found in the midbody. The protein localises to the cytoplasmic vesicle. Functionally, acts as a regulator of endocytic traffic by participating in membrane delivery. Required for the abscission step in cytokinesis, possibly by acting as an 'address tag' delivering recycling endosome membranes to the cleavage furrow during late cytokinesis. In case of infection by HCMV (human cytomegalovirus), may participate in egress of the virus out of nucleus; this function is independent of ARF6. The protein is Rab11 family-interacting protein 4 (RAB11FIP4) of Homo sapiens (Human).